The primary structure comprises 203 residues: Cardiotrophin-1 (203 aa).

Belongs to the IL-6 superfamily. Expressed in the ventricle and atrium of adult rats. Also detected in the lung, kidney, liver, skeletal muscle, stomach and urinary bladder. Not detected in brain, colon, testis, spleen or thymus. Overexpressed in the ventricles in the case of hypertension and hypertrophy.

The protein resides in the secreted. In terms of biological role, induces cardiac myocyte hypertrophy in vitro. Binds to and activates the ILST/gp130 receptor. The sequence is that of Cardiotrophin-1 (Ctf1) from Rattus norvegicus (Rat).